The primary structure comprises 238 residues: MSEDLAKQLASYKAQLQQVEAALSGNGENEDLLKLKKDLQEVIELTKDLLSTQPSETLASSDSFASTQPTHSWKVGDKCMAVWSEDGQCYEAEIEEIDEENGTAAITFAVYGNAEVTPLLNLKPVEEGRKAKEDSGNKPMSKKEMIAQQREYKKKKALKKAQRIKELEQEREDQKVKWQQFNNRAYSKNKKGQVKRSIFASPESVTGKVGVGTCGIADKPMTQYQDTSKYNVRHLMPQ.

One can recognise a Tudor domain in the interval 72–132 (SWKVGDKCMA…KPVEEGRKAK (61 aa)). Residues 142 to 160 (KKEMIAQQREYKKKKALKK) carry the Nuclear localization signal motif. Ser-201 bears the Phosphoserine mark. N6-acetyllysine is present on Lys-219.

This sequence belongs to the SMN family. In terms of assembly, associates with spliceosomes. Associates with U4/U5/U6 tri-snRNP and with U2 snRNP.

The protein localises to the nucleus speckle. It localises to the nucleus. It is found in the cajal body. Involved in spliceosome assembly. In Mus musculus (Mouse), this protein is Survival of motor neuron-related-splicing factor 30 (Smndc1).